The chain runs to 308 residues: Endonuclease G, mitochondrial (308 aa).

The active-site Proton acceptor is His-148. Asn-180 provides a ligand contact to Mg(2+).

This sequence belongs to the DNA/RNA non-specific endonuclease family. Homodimer; disulfide-linked. Interacts with crn-5, crn-4, crn-1 and cyn-13. The cofactor is Mg(2+).

Its subcellular location is the mitochondrion. In terms of biological role, endonuclease important for programmed cell death; it mediates apoptotic DNA fragmentation. This is Endonuclease G, mitochondrial (cps-6) from Caenorhabditis elegans.